The following is a 456-amino-acid chain: Vitamin K-dependent protein C (456 aa).

The signal sequence occupies residues 1–20; that stretch reads MWQLASLSLLLTICGTCSTA. The propeptide occupies 21–42; the sequence is APPGSVFSSSESAHQVLRIRKR. The 42-residue stretch at 47 to 88 folds into the Gla domain; the sequence is LEEIRAGSLERECMEEICDFEEAKEIFQNVDDTLAYWSKYVD. 4-carboxyglutamate is present on residues Glu48, Glu49, Glu56, Glu58, Glu61, Glu62, Glu67, Glu68, and Glu71. Cys59 and Cys64 are disulfide-bonded. Cystine bridges form between Cys92–Cys111, Cys101–Cys106, Cys105–Cys120, and Cys122–Cys131. EGF-like domains are found at residues 97 to 132 and 136 to 176; these read PEHA…RFCQ and SYIN…LQCQ. Residue Asp113 is modified to (3R)-3-hydroxyaspartate. An N-linked (GlcNAc...) asparagine glycan is attached at Asn139. 5 disulfide bridges follow: Cys140-Cys151, Cys147-Cys160, Cys162-Cys175, Cys183-Cys318, and Cys237-Cys253. N-linked (GlcNAc...) asparagine glycosylation is present at Asn202. The region spanning 211 to 445 is the Peptidase S1 domain; it reads LVNGKVTRRG…YLDWIHSHIR (235 aa). His252 serves as the catalytic Charge relay system. Residue Asn289 is glycosylated (N-linked (GlcNAc...) asparagine). The active-site Charge relay system is the Asp298. Asn350 carries N-linked (GlcNAc...) asparagine glycosylation. 2 disulfides stabilise this stretch: Cys368/Cys382 and Cys393/Cys421. Ser397 acts as the Charge relay system in catalysis.

The protein belongs to the peptidase S1 family. Synthesized as a single chain precursor, which is cleaved into a light chain and a heavy chain held together by a disulfide bond. The enzyme is then activated by thrombin, which cleaves a tetradecapeptide from the amino end of the heavy chain; this reaction, which occurs at the surface of endothelial cells, is strongly promoted by thrombomodulin. Post-translationally, the vitamin K-dependent, enzymatic carboxylation of some Glu residues allows the modified protein to bind calcium. The iron and 2-oxoglutarate dependent 3-hydroxylation of aspartate and asparagine is (R) stereospecific within EGF domains. In terms of tissue distribution, plasma; synthesized in the liver.

It is found in the secreted. The protein localises to the golgi apparatus. It localises to the endoplasmic reticulum. It carries out the reaction Degradation of blood coagulation factors Va and VIIIa.. Its function is as follows. Protein C is a vitamin K-dependent serine protease that regulates blood coagulation by inactivating factors Va and VIIIa in the presence of calcium ions and phospholipids. Exerts a protective effect on the endothelial cell barrier function. In Canis lupus familiaris (Dog), this protein is Vitamin K-dependent protein C (PROC).